A 154-amino-acid polypeptide reads, in one-letter code: 6,7-dimethyl-8-ribityllumazine synthase (154 aa).

Residues Phe-23, 57–59 (AFE), and 81–83 (AII) each bind 5-amino-6-(D-ribitylamino)uracil. 86–87 (ST) lines the (2S)-2-hydroxy-3-oxobutyl phosphate pocket. The Proton donor role is filled by His-89. 5-amino-6-(D-ribitylamino)uracil is bound at residue Phe-114. (2S)-2-hydroxy-3-oxobutyl phosphate is bound at residue Arg-128.

Belongs to the DMRL synthase family.

The enzyme catalyses (2S)-2-hydroxy-3-oxobutyl phosphate + 5-amino-6-(D-ribitylamino)uracil = 6,7-dimethyl-8-(1-D-ribityl)lumazine + phosphate + 2 H2O + H(+). It functions in the pathway cofactor biosynthesis; riboflavin biosynthesis; riboflavin from 2-hydroxy-3-oxobutyl phosphate and 5-amino-6-(D-ribitylamino)uracil: step 1/2. Its function is as follows. Catalyzes the formation of 6,7-dimethyl-8-ribityllumazine by condensation of 5-amino-6-(D-ribitylamino)uracil with 3,4-dihydroxy-2-butanone 4-phosphate. This is the penultimate step in the biosynthesis of riboflavin. The sequence is that of 6,7-dimethyl-8-ribityllumazine synthase from Nitratiruptor sp. (strain SB155-2).